The sequence spans 166 residues: Cyanate hydratase (166 aa).

Residues Arg-106, Glu-109, and Ser-132 contribute to the active site.

The protein belongs to the cyanase family.

It carries out the reaction cyanate + hydrogencarbonate + 3 H(+) = NH4(+) + 2 CO2. In terms of biological role, catalyzes the reaction of cyanate with bicarbonate to produce ammonia and carbon dioxide. In Verticillium alfalfae (strain VaMs.102 / ATCC MYA-4576 / FGSC 10136) (Verticillium wilt of alfalfa), this protein is Cyanate hydratase.